Consider the following 72-residue polypeptide: Large ribosomal subunit protein bL28 (72 aa).

The protein belongs to the bacterial ribosomal protein bL28 family.

This chain is Large ribosomal subunit protein bL28, found in Chlorobium limicola (strain DSM 245 / NBRC 103803 / 6330).